A 455-amino-acid polypeptide reads, in one-letter code: Protein indeterminate-domain 7 (455 aa).

Residues 1–52 form a disordered region; it reads MMMNRDILFHQQQQQQMEENMSNLTSASGDQASVSSGNRTETSGSNINQHHQ. Residues 17 to 49 show a composition bias toward polar residues; sequence MEENMSNLTSASGDQASVSSGNRTETSGSNINQ. Serine 82 carries the post-translational modification Phosphoserine. C2H2-type zinc fingers lie at residues 92–114 and 134–164; these read FICE…KRGH and YVCP…FRKH. The short motif at 156 to 163 is the Nuclear localization signal element; that stretch reads IKKHFFRK. Residues 169 to 192 form a C2H2-type 2; degenerate zinc finger; the sequence is WKCEKCSKKYAVQSDWKAHAKTCG. 8 residues coordinate Zn(2+): cysteine 171, cysteine 174, histidine 187, cysteine 191, cysteine 198, cysteine 200, histidine 213, and cysteine 217. The CCHC-type 2; atypical zinc-finger motif lies at 196-219; the sequence is YKCDCGTLFSRRDSFITHRAFCDA. The SHR-binding stretch occupies residues 206 to 218; it reads RRDSFITHRAFCD. Residues 235 to 351 form a disordered region; that stretch reads QASNSPHHHH…PEEEERSSRS (117 aa). 2 stretches are compositionally biased toward low complexity: residues 248 to 265 and 288 to 299; these read QQNI…SNSN and SSNPNPNGNNGN.

It localises to the nucleus. In terms of biological role, probable transcription factor. The chain is Protein indeterminate-domain 7 from Arabidopsis thaliana (Mouse-ear cress).